Consider the following 386-residue polypeptide: Decapping nuclease RAI1 (386 aa).

Arg-34 contacts substrate. Glu-159 serves as a coordination point for a divalent metal cation. Substrate is bound at residue Glu-205. Residues Asp-207, Glu-225, and Leu-226 each contribute to the a divalent metal cation site. Substrate contacts are provided by Lys-227 and Gln-251.

Belongs to the DXO/Dom3Z family. Interacts with RAT1; the interaction is direct, stabilizes RAT1 protein structure and stimulates its exoribonuclease activity. The interaction also stimulates RAI1 pyrophosphohydrolase activity, probably by recruiting it to mRNA substrates. It depends on a divalent metal cation as a cofactor.

It localises to the nucleus. The enzyme catalyses a 5'-end NAD(+)-phospho-ribonucleoside in mRNA + H2O = a 5'-end phospho-ribonucleoside in mRNA + NAD(+) + H(+). The catalysed reaction is a 5'-end (N(7)-methyl 5'-triphosphoguanosine)-ribonucleoside-ribonucleotide in mRNA + H2O = a (N(7)-methyl 5'-triphosphoguanosine)-nucleoside + a 5'-end phospho-ribonucleoside in mRNA + H(+). It catalyses the reaction a 5'-end triphospho-ribonucleoside in mRNA + H2O = a 5'-end phospho-ribonucleoside in mRNA + diphosphate + H(+). Its function is as follows. Decapping enzyme for NAD-capped RNAs: specifically hydrolyzes the nicotinamide adenine dinucleotide (NAD) cap from a subset of RNAs by removing the entire NAD moiety from the 5'-end of an NAD-capped RNA. The NAD-cap is present at the 5'-end of some RNAs and snoRNAs. In contrast to the canonical 5'-end N7 methylguanosine (m7G) cap, the NAD cap promotes mRNA decay. Also acts as a non-canonical decapping enzyme that removes the entire cap structure of m7G capped or incompletely capped RNAs. Has decapping activity toward incomplete 5'-end m7G cap mRNAs such as unmethylated 5'-end-capped RNA (cap0), while it has no activity toward 2'-O-ribose methylated m7G cap (cap1). Also possesses RNA 5'-pyrophosphohydrolase activity by hydrolyzing the 5'-end triphosphate to release pyrophosphates. Stimulates exoribonuclease activity of Rat1, allowing it to degrade RNAs with stable secondary structure more effectively. The sequence is that of Decapping nuclease RAI1 (RAI1) from Cryptococcus neoformans var. neoformans serotype D (strain B-3501A) (Filobasidiella neoformans).